Here is a 170-residue protein sequence, read N- to C-terminus: Shikimate kinase (170 aa).

11–16 (LSGKST) is an ATP binding site. S15 is a Mg(2+) binding site. Substrate-binding residues include D33, R57, and G79. R119 serves as a coordination point for ATP. R137 is a substrate binding site.

It belongs to the shikimate kinase family. As to quaternary structure, monomer. Requires Mg(2+) as cofactor.

Its subcellular location is the cytoplasm. It carries out the reaction shikimate + ATP = 3-phosphoshikimate + ADP + H(+). The protein operates within metabolic intermediate biosynthesis; chorismate biosynthesis; chorismate from D-erythrose 4-phosphate and phosphoenolpyruvate: step 5/7. Catalyzes the specific phosphorylation of the 3-hydroxyl group of shikimic acid using ATP as a cosubstrate. The protein is Shikimate kinase of Clostridium botulinum (strain 657 / Type Ba4).